The chain runs to 2298 residues: Protein Ycf2 (2298 aa).

Position 1638–1645 (1638–1645 (GSIGTGRS)) interacts with ATP.

The protein belongs to the Ycf2 family.

The protein localises to the plastid. Its subcellular location is the chloroplast stroma. Probable ATPase of unknown function. Its presence in a non-photosynthetic plant (Epifagus virginiana) and experiments in tobacco indicate that it has an essential function which is probably not related to photosynthesis. This is Protein Ycf2 from Gossypium barbadense (Sea Island cotton).